Here is a 240-residue protein sequence, read N- to C-terminus: Ornithine decarboxylase antizyme (240 aa).

Disordered regions lie at residues 18–45 (RSEPISSSNRATKRTISSSSSSSSSSAG) and 69–95 (DHDRASPLKEYNRKTSIDSTTTASSEF). A compositionally biased stretch (polar residues) spans 21–33 (PISSSNRATKRTI). Residues 34–43 (SSSSSSSSSS) are compositionally biased toward low complexity. The span at 69 to 84 (DHDRASPLKEYNRKTS) shows a compositional bias: basic and acidic residues. The span at 85–95 (IDSTTTASSEF) shows a compositional bias: polar residues.

The protein belongs to the ODC antizyme family. Interacts with ODC1 and thereby sterically blocks ODC homodimerization. In terms of tissue distribution, preferentially expressed in adult female midguts.

In terms of biological role, ornithine decarboxylase (ODC) antizyme protein that negatively regulates ODC activity and intracellular polyamine biosynthesis and uptake in response to increased intracellular polyamine levels. Binds to ODC monomers, inhibiting the assembly of the functional ODC homodimer, and targets the monomers for ubiquitin-independent proteolytic destruction by the 26S proteasome. In Aedes aegypti (Yellowfever mosquito), this protein is Ornithine decarboxylase antizyme (Oda).